Here is a 410-residue protein sequence, read N- to C-terminus: MLVLVVNCGSSSIKYQVREVTPEGSEPSPYTSSMPAINENIPLATATAGMAGDQVITKGLIENIGTSEIQDHTQALEILARRLDEELGGRTIDAAGHRVVHGGERFSAPVLVNNEIIRAIERLAPLAPLHNPAHALGLRAIQKTYPGMPQVCVFDTAFHRTMPEKAWRYAIPEQWYEMDGMRRYGFHGTSHDYVTGKACEFLGIPREQFNTVVAHLGNGASVTAIREGRSYDTSMGYTPLAGLVMGTRSGDLDPSVVTAMLERKPGMSAQDMNRILNNESGLQGICGDSDMRAVEQRADSGDERAQLALDMAAYRLAKYIGGYHVAVGGAQALIFTAGIGENSPGFRALVCDQLGALGVRLDASRNEHPEGNVARISFPDSAVEVLVVATDEERAIAEATAALVWERVKN.

Asn7 lines the Mg(2+) pocket. Lys14 is a binding site for ATP. Arg98 contacts substrate. Residue Asp155 is the Proton donor/acceptor of the active site. ATP contacts are provided by residues 215 to 219, 290 to 292, and 338 to 342; these read HLGNG, DMR, and GIGEN. Glu392 serves as a coordination point for Mg(2+).

Belongs to the acetokinase family. As to quaternary structure, homodimer. It depends on Mg(2+) as a cofactor. The cofactor is Mn(2+).

It is found in the cytoplasm. It catalyses the reaction acetate + ATP = acetyl phosphate + ADP. The protein operates within metabolic intermediate biosynthesis; acetyl-CoA biosynthesis; acetyl-CoA from acetate: step 1/2. Functionally, catalyzes the formation of acetyl phosphate from acetate and ATP. Can also catalyze the reverse reaction. This Kocuria rhizophila (strain ATCC 9341 / DSM 348 / NBRC 103217 / DC2201) protein is Acetate kinase.